A 276-amino-acid polypeptide reads, in one-letter code: Tumor necrosis factor-inducible gene 6 protein (276 aa).

The N-terminal stretch at 1-17 is a signal peptide; that stretch reads MIILIYLFVLVWEEAQG. Residues 36-129 form the Link domain; it reads GVYHREARSG…SERWDAYCYN (94 aa). Cystine bridges form between cysteine 58–cysteine 127, cysteine 82–cysteine 103, and cysteine 135–cysteine 161. An N-linked (GlcNAc...) asparagine glycan is attached at asparagine 118. A CUB domain is found at 135-247; that stretch reads CGGVFTDPKR…GGFQIKYVTV (113 aa). Residues glutamate 183, aspartate 191, aspartate 232, serine 234, and valine 235 each contribute to the Ca(2+) site. Residues cysteine 188 and cysteine 210 are joined by a disulfide bond. Asparagine 258 is a glycosylation site (N-linked (GlcNAc...) asparagine).

Interacts (via Link domain) with inter-alpha-inhibitor (I-alpha-I) component bikunin. Interacts with ITIH2/HC2; this interaction is required for transesterification of the HC to hyaluronan. Interacts (via Link and CUB domains) with ITIH1. Chondroitin sulfate may be required for the stability of the complex. Interacts (via Link domain) with various C-X-C and C-C chemokines including PF4, CXCL8, CXCL11, CXCL12, CCL2, CCL7, CCL19, CCL21, and CCL27; this interaction interferes with chemokine binding to glycosaminoglycans. Interacts (primarily via Link domain) with BMP2; this interaction is inhibited by hyaluronan. Interacts (via both Link and CUB domains) with TNFSF11. Interacts (via CUB domain) with FN1 (via type III repeats 9-14); this interaction enhances fibronectin fibril assembly. TNFAIP6 may act as a bridging molecule between FN1 and THBS1. Vascular smooth muscle cells.

The protein localises to the secreted. Its function is as follows. Major regulator of extracellular matrix organization during tissue remodeling. Catalyzes the transfer of a heavy chain (HC) from inter-alpha-inhibitor (I-alpha-I) complex to hyaluronan. Cleaves the ester bond between the C-terminus of the HC and GalNAc residue of the chondroitin sulfate chain in I-alpha-I complex followed by transesterification of the HC to hyaluronan. In the process, potentiates the antiprotease function of I-alpha-I complex through release of free bikunin. Acts as a catalyst in the formation of hyaluronan-HC oligomers and hyaluronan-rich matrix surrounding the cumulus cell-oocyte complex, a necessary step for oocyte fertilization. Assembles hyaluronan in pericellular matrices that serve as platforms for receptor clustering and signaling. Enables binding of hyaluronan deposited on the surface of macrophages to LYVE1 on lymphatic endothelium and facilitates macrophage extravasation. Alters hyaluronan binding to functionally latent CD44 on vascular endothelium, switching CD44 into an active state that supports leukocyte rolling. Modulates the interaction of chemokines with extracellular matrix components and proteoglycans on endothelial cell surface, likely preventing chemokine gradient formation. In a negative feedback mechanism, may limit excessive neutrophil recruitment at inflammatory sites by antagonizing the association of CXCL8 with glycosaminoglycans on vascular endothelium. Has a role in osteogenesis and bone remodeling. Inhibits BMP2-dependent differentiation of mesenchymal stem cell to osteoblasts. Protects against bone erosion during inflammation by inhibiting TNFSF11/RANKL-dependent osteoclast activation. This is Tumor necrosis factor-inducible gene 6 protein (TNFAIP6) from Oryctolagus cuniculus (Rabbit).